Consider the following 314-residue polypeptide: 4-hydroxy-3-methylbut-2-enyl diphosphate reductase (314 aa).

Residue cysteine 12 participates in [4Fe-4S] cluster binding. 2 residues coordinate (2E)-4-hydroxy-3-methylbut-2-enyl diphosphate: histidine 41 and histidine 74. Dimethylallyl diphosphate-binding residues include histidine 41 and histidine 74. Histidine 41 and histidine 74 together coordinate isopentenyl diphosphate. Cysteine 96 contributes to the [4Fe-4S] cluster binding site. Histidine 124 provides a ligand contact to (2E)-4-hydroxy-3-methylbut-2-enyl diphosphate. Residue histidine 124 participates in dimethylallyl diphosphate binding. Histidine 124 lines the isopentenyl diphosphate pocket. The active-site Proton donor is the glutamate 126. Threonine 168 provides a ligand contact to (2E)-4-hydroxy-3-methylbut-2-enyl diphosphate. Cysteine 198 lines the [4Fe-4S] cluster pocket. (2E)-4-hydroxy-3-methylbut-2-enyl diphosphate-binding residues include serine 226, serine 227, asparagine 228, and serine 270. Serine 226, serine 227, asparagine 228, and serine 270 together coordinate dimethylallyl diphosphate. 4 residues coordinate isopentenyl diphosphate: serine 226, serine 227, asparagine 228, and serine 270.

It belongs to the IspH family. [4Fe-4S] cluster is required as a cofactor.

It carries out the reaction isopentenyl diphosphate + 2 oxidized [2Fe-2S]-[ferredoxin] + H2O = (2E)-4-hydroxy-3-methylbut-2-enyl diphosphate + 2 reduced [2Fe-2S]-[ferredoxin] + 2 H(+). The enzyme catalyses dimethylallyl diphosphate + 2 oxidized [2Fe-2S]-[ferredoxin] + H2O = (2E)-4-hydroxy-3-methylbut-2-enyl diphosphate + 2 reduced [2Fe-2S]-[ferredoxin] + 2 H(+). Its pathway is isoprenoid biosynthesis; dimethylallyl diphosphate biosynthesis; dimethylallyl diphosphate from (2E)-4-hydroxy-3-methylbutenyl diphosphate: step 1/1. It functions in the pathway isoprenoid biosynthesis; isopentenyl diphosphate biosynthesis via DXP pathway; isopentenyl diphosphate from 1-deoxy-D-xylulose 5-phosphate: step 6/6. In terms of biological role, catalyzes the conversion of 1-hydroxy-2-methyl-2-(E)-butenyl 4-diphosphate (HMBPP) into a mixture of isopentenyl diphosphate (IPP) and dimethylallyl diphosphate (DMAPP). Acts in the terminal step of the DOXP/MEP pathway for isoprenoid precursor biosynthesis. This is 4-hydroxy-3-methylbut-2-enyl diphosphate reductase from Pseudomonas aeruginosa (strain LESB58).